The primary structure comprises 249 residues: Quinate/shikimate dehydrogenase (249 aa).

Residues Lys32 and Asp68 each contribute to the substrate site. NAD(+) is bound by residues 93–96 (AGGA), 116–119 (NRRD), Lys166, 193–196 (CVYN), and Gly216.

The protein belongs to the shikimate dehydrogenase family. As to quaternary structure, homodimer.

It catalyses the reaction L-quinate + NAD(+) = 3-dehydroquinate + NADH + H(+). It carries out the reaction L-quinate + NADP(+) = 3-dehydroquinate + NADPH + H(+). The catalysed reaction is shikimate + NADP(+) = 3-dehydroshikimate + NADPH + H(+). The enzyme catalyses shikimate + NAD(+) = 3-dehydroshikimate + NADH + H(+). It functions in the pathway metabolic intermediate biosynthesis; chorismate biosynthesis; chorismate from D-erythrose 4-phosphate and phosphoenolpyruvate: step 4/7. Its function is as follows. The actual biological function of YdiB remains unclear, nor is it known whether 3-dehydroshikimate or quinate represents the natural substrate. Catalyzes the reversible NAD-dependent reduction of both 3-dehydroshikimate (DHSA) and 3-dehydroquinate to yield shikimate (SA) and quinate, respectively. It can use both NAD or NADP for catalysis, however it has higher catalytic efficiency with NAD. The protein is Quinate/shikimate dehydrogenase of Shigella flexneri serotype 5b (strain 8401).